The chain runs to 486 residues: Ribosomal RNA small subunit methyltransferase F (486 aa).

S-adenosyl-L-methionine is bound by residues 124-130 (ASAPGSK), E148, D175, and D193. C246 acts as the Nucleophile in catalysis.

Belongs to the class I-like SAM-binding methyltransferase superfamily. RsmB/NOP family.

The protein localises to the cytoplasm. The catalysed reaction is cytidine(1407) in 16S rRNA + S-adenosyl-L-methionine = 5-methylcytidine(1407) in 16S rRNA + S-adenosyl-L-homocysteine + H(+). Functionally, specifically methylates the cytosine at position 1407 (m5C1407) of 16S rRNA. The polypeptide is Ribosomal RNA small subunit methyltransferase F (Shewanella putrefaciens (strain CN-32 / ATCC BAA-453)).